The chain runs to 363 residues: Cysteine proteinase 15A (363 aa).

The first 18 residues, 1-18 (MDRRFLFALFLFAAVATA), serve as a signal peptide directing secretion. Positions 19–131 (VTDDTNNDDF…QKAPILPTTN (113 aa)) are cleaved as a propeptide — activation peptide. 2 cysteine pairs are disulfide-bonded: Cys153–Cys203 and Cys187–Cys236. Cys156 is a catalytic residue. A glycan (N-linked (GlcNAc...) asparagine) is linked at Asn249. A disulfide bridge connects residues Cys292 and Cys347. Catalysis depends on residues His299 and Asn326.

The protein belongs to the peptidase C1 family.

This chain is Cysteine proteinase 15A, found in Pisum sativum (Garden pea).